The primary structure comprises 1366 residues: Protein strawberry notch homolog 2 (1366 aa).

Disordered regions lie at residues 1-24 (MLAVGPAMDRDYPQHEPPPAGSLL), 174-217 (QEQS…KQHP), 614-640 (STKRKRDRGAGSKRKRRPRGRGAKAPR), and 1324-1366 (HAGP…QAPL). Positions 15–24 (HEPPPAGSLL) are enriched in pro residues. Over residues 182 to 194 (PEEEDEAEEEEAE) the composition is skewed to acidic residues. A compositionally biased stretch (basic residues) spans 614–637 (STKRKRDRGAGSKRKRRPRGRGAK). Residues 1333–1347 (LGEGAGAGGAAGGGP) are compositionally biased toward gly residues.

It belongs to the SBNO family. As to quaternary structure, interacts with TAL1; this interaction inhibits TAL1 occupancy of the DCSTAMP promoter, leading to the activation of the DCSTAMP promoter by the transcription factor MITF. As to expression, detected in macrophages. IL10 regulates expression in a STAT3-dependent way.

In terms of biological role, acts as a transcriptional coregulator, that can have both coactivator and corepressor functions. Inhibits the DCSTAMP-repressive activity of TAL1, hence enhancing the access of the transcription factor MITF to the DC-STAMP promoter in osteoclast. Plays a role in bone homeostasis; required as a positive regulator in TNFSF11//RANKL-mediated osteoclast fusion via a DCSTAMP-dependent pathway. May also be required in the regulation of osteoblast differentiation. Involved in the transcriptional corepression of NF-kappaB in macrophages. Plays a role as a regulator in the pro-inflammatory cascade. In Homo sapiens (Human), this protein is Protein strawberry notch homolog 2 (SBNO2).